The primary structure comprises 42 residues: Photosystem I reaction center subunit IX (42 aa).

Residues tyrosine 7 to isoleucine 27 traverse the membrane as a helical segment.

Belongs to the PsaJ family.

Its subcellular location is the plastid. It localises to the chloroplast thylakoid membrane. Its function is as follows. May help in the organization of the PsaE and PsaF subunits. This chain is Photosystem I reaction center subunit IX, found in Daucus carota (Wild carrot).